The sequence spans 442 residues: tRNA-2-methylthio-N(6)-dimethylallyladenosine synthase (442 aa).

An MTTase N-terminal domain is found at 2–120 (KKVFIRTFGC…LPKMIVDKET (119 aa)). Positions 11, 49, 83, 157, 161, and 164 each coordinate [4Fe-4S] cluster. The 233-residue stretch at 143 to 375 (RVEGGAAFVS…NEVIEAETAR (233 aa)) folds into the Radical SAM core domain. The TRAM domain occupies 378–441 (QTMIGTVQRC…TFSLRGKIVE (64 aa)).

Belongs to the methylthiotransferase family. MiaB subfamily. Monomer. Requires [4Fe-4S] cluster as cofactor.

The protein localises to the cytoplasm. The enzyme catalyses N(6)-dimethylallyladenosine(37) in tRNA + (sulfur carrier)-SH + AH2 + 2 S-adenosyl-L-methionine = 2-methylsulfanyl-N(6)-dimethylallyladenosine(37) in tRNA + (sulfur carrier)-H + 5'-deoxyadenosine + L-methionine + A + S-adenosyl-L-homocysteine + 2 H(+). Catalyzes the methylthiolation of N6-(dimethylallyl)adenosine (i(6)A), leading to the formation of 2-methylthio-N6-(dimethylallyl)adenosine (ms(2)i(6)A) at position 37 in tRNAs that read codons beginning with uridine. In Neisseria meningitidis serogroup A / serotype 4A (strain DSM 15465 / Z2491), this protein is tRNA-2-methylthio-N(6)-dimethylallyladenosine synthase.